A 312-amino-acid polypeptide reads, in one-letter code: HTH-type transcriptional regulator TdcA (312 aa).

Positions 7-64 (PKTQHLVVFQEVIRSGSIGSAAKELGLTQPAVSKIINDIEDYFGVELVVRKNTGVTLT) constitute an HTH lysR-type domain. The segment at residues 24–43 (IGSAAKELGLTQPAVSKIIN) is a DNA-binding region (H-T-H motif).

The protein belongs to the LysR transcriptional regulatory family.

The protein operates within amino-acid degradation; L-threonine degradation via propanoate pathway [regulation]. Transcriptional activator for the tdcABCDE operon. The chain is HTH-type transcriptional regulator TdcA (tdcA) from Escherichia coli O157:H7.